The primary structure comprises 71 residues: Large ribosomal subunit protein uL29 (71 aa).

The protein belongs to the universal ribosomal protein uL29 family.

This is Large ribosomal subunit protein uL29 from Rickettsia canadensis (strain McKiel).